The following is a 715-amino-acid chain: ATP-dependent RecD2 DNA helicase (715 aa).

The not required for helicase activity stretch occupies residues 1–150 (MSAALPAEPF…STLHKMVSSW (150 aa)). ATP contacts are provided by residues glutamine 343 and 363 to 367 (GTGKS). DNA-binding regions lie at residues glycine 391 and 407–414 (TVHRLLGY). Residue glutamine 466 participates in ATP binding. Residue valine 470 is a DNA-binding region. Residue arginine 493 participates in ATP binding. 3 consecutive DNA-binding regions follow at residues 554–555 (RK), 596–604 (NDYNNEIFN), and 644–647 (TVHR). Arginine 679 contributes to the ATP binding site.

This sequence belongs to the RecD family. RecD2 subfamily. In terms of assembly, monomer; homodimers seem to be inactive.

The enzyme catalyses Couples ATP hydrolysis with the unwinding of duplex DNA at the replication fork by translocating in the 5'-3' direction. This creates two antiparallel DNA single strands (ssDNA). The leading ssDNA polymer is the template for DNA polymerase III holoenzyme which synthesizes a continuous strand.. The catalysed reaction is ATP + H2O = ADP + phosphate + H(+). Its function is as follows. DNA-dependent ATPase (ssDNA stimulates the ATPase better than dsDNA) and ATP-dependent 5'-3' DNA helicase. Plays a role in an antioxidant pathway. Involved in DNA damage repair and/or recombination. Appears to move along DNA in single base steps, powered by hydrolysis of 1 molecule of ATP. Has low processivity, unwinds about 15-20 base pairs/second. Short (20 bp) substrates with 5'-overhangs or forked ends are the best substrates, is much less efficient on 52 or 76 bp substrates with 5'-overhangs. The presence of single-stranded DNA-binding protein (SSB) increases unwinding 4-5 fold. Has no activity on blunt DNA or DNA with 3'-overhangs. Requires at least 10 bases of 5'-ssDNA for helicase activity. The sequence is that of ATP-dependent RecD2 DNA helicase from Deinococcus radiodurans (strain ATCC 13939 / DSM 20539 / JCM 16871 / CCUG 27074 / LMG 4051 / NBRC 15346 / NCIMB 9279 / VKM B-1422 / R1).